A 439-amino-acid polypeptide reads, in one-letter code: Lactamase-like protein nscB (439 aa).

Zn(2+)-binding residues include H214, H216, D218, and H219. The active-site Proton donor/acceptor is D218.

Belongs to the metallo-beta-lactamase superfamily. Requires Zn(2+) as cofactor.

It functions in the pathway secondary metabolite biosynthesis. Its function is as follows. Lactamase-like protein; part of the gene cluster that mediates the biosynthesis of neosartoricin B, a prenylated anthracenone that probably exhibits T-cell antiproliferative activity, suggestive of a physiological role as an immunosuppressive agent. The non-reducing polyketide synthase nscA probably synthesizes and cyclizes the decaketide backbone. The hydrolase nscB then mediates the product release through hydrolysis followed by spontaneous decarboxylation. The prenyltransferase nscD catalyzes the addition of the dimethylallyl group to the aromatic C5. The FAD-dependent monooxygenase nscC is then responsible for the stereospecific hydroxylation at C2. Neosartoricin B can be converted into two additional compounds neosartoricins C and D. Neosartoricin C is a spirocyclic compound that is cyclized through the attack of C3 hydroxyl on C14, followed by dehydration. On the other hand, neosartoricin D is a further cyclized compound in which attack of C2 on C14 in neosartoricin C results in the formation of the acetal-containing dioxabicyclo-octanone ring. Both of these compounds are novel and possibly represent related metabolites of the gene cluster. The polypeptide is Lactamase-like protein nscB (Arthroderma benhamiae (strain ATCC MYA-4681 / CBS 112371) (Trichophyton mentagrophytes)).